Reading from the N-terminus, the 314-residue chain is uncharacterized protein (314 aa).

Disordered regions lie at residues 170–203 (RSSMNSQSQMSESSFPTPIDPPPRIPHPPLNPDE) and 258–314 (VGES…PKKR). A compositionally biased stretch (low complexity) spans 171-186 (SSMNSQSQMSESSFPT). The segment covering 187–200 (PIDPPPRIPHPPLN) has biased composition (pro residues). Polar residues predominate over residues 261–272 (SSRQGENTQNVH). Residues 289–303 (RFKDDARKSNEDEHM) show a composition bias toward basic and acidic residues.

This is an uncharacterized protein from Arabidopsis thaliana (Mouse-ear cress).